Consider the following 488-residue polypeptide: Protein nucleotidyltransferase YdiU (488 aa).

ATP contacts are provided by Gly-91, Gly-93, Arg-94, Lys-114, Asp-126, Gly-127, Arg-177, and Arg-184. The active-site Proton acceptor is the Asp-253. 2 residues coordinate Mg(2+): Asn-254 and Asp-263. Asp-263 is an ATP binding site.

It belongs to the SELO family. Mg(2+) serves as cofactor. Requires Mn(2+) as cofactor.

The catalysed reaction is L-seryl-[protein] + ATP = 3-O-(5'-adenylyl)-L-seryl-[protein] + diphosphate. It catalyses the reaction L-threonyl-[protein] + ATP = 3-O-(5'-adenylyl)-L-threonyl-[protein] + diphosphate. The enzyme catalyses L-tyrosyl-[protein] + ATP = O-(5'-adenylyl)-L-tyrosyl-[protein] + diphosphate. It carries out the reaction L-histidyl-[protein] + UTP = N(tele)-(5'-uridylyl)-L-histidyl-[protein] + diphosphate. The catalysed reaction is L-seryl-[protein] + UTP = O-(5'-uridylyl)-L-seryl-[protein] + diphosphate. It catalyses the reaction L-tyrosyl-[protein] + UTP = O-(5'-uridylyl)-L-tyrosyl-[protein] + diphosphate. Nucleotidyltransferase involved in the post-translational modification of proteins. It can catalyze the addition of adenosine monophosphate (AMP) or uridine monophosphate (UMP) to a protein, resulting in modifications known as AMPylation and UMPylation. In Bacillus mycoides (strain KBAB4) (Bacillus weihenstephanensis), this protein is Protein nucleotidyltransferase YdiU.